A 974-amino-acid polypeptide reads, in one-letter code: Kinase-interacting protein 1 (974 aa).

Residues 10–90 form the NAB domain; it reads YSWWAASHIR…ERYDHLSKEL (81 aa). Positions 151 to 170 are disordered; the sequence is STASKQKQGKQSSKIEDAAK. The stretch at 173–423 forms a coiled coil; that stretch reads LSKNEAIEEI…DVVNQNSCLR (251 aa). The tract at residues 586–614 is disordered; that stretch reads AQPTPAEKGDEKVSAQSGNTSVYETHTQK. The segment covering 599 to 610 has biased composition (polar residues); sequence SAQSGNTSVYET. Positions 641–697 form a coiled coil; sequence NEYTAILKNYKEVTKKLSDIEKKDRDTEFELTLQTRELKSAIAKRDEEIHNLRQKLS. The tract at residues 714–740 is disordered; that stretch reads LLDPSDPSSARGLKPEDLPQIKDGDDE. The segment covering 726–736 has biased composition (basic and acidic residues); the sequence is LKPEDLPQIKD. 2 coiled-coil regions span residues 784–807 and 882–905; these read HQIQ…RDKE and AAKF…ELEA.

In terms of assembly, homodimer or homooligomer. Interacts with PRK1. Phosphorylated by PRK1. Expressed in mature pollen grains and pollen tubes, but not in style, ovary, petal, leaf, root or sepal.

The protein localises to the cytoplasm. Probably involved in the receptor-like kinase-mediated signal transduction pathway. This chain is Kinase-interacting protein 1, found in Petunia integrifolia (Violet-flowered petunia).